Reading from the N-terminus, the 356-residue chain is DNA polymerase IV (356 aa).

The UmuC domain occupies 7 to 188; that stretch reads IIHIDMDCFY…LPLKKIPGVG (182 aa). 2 residues coordinate Mg(2+): Asp-11 and Asp-106. Glu-107 is a catalytic residue.

The protein belongs to the DNA polymerase type-Y family. As to quaternary structure, monomer. It depends on Mg(2+) as a cofactor.

It is found in the cytoplasm. It catalyses the reaction DNA(n) + a 2'-deoxyribonucleoside 5'-triphosphate = DNA(n+1) + diphosphate. Functionally, poorly processive, error-prone DNA polymerase involved in untargeted mutagenesis. Copies undamaged DNA at stalled replication forks, which arise in vivo from mismatched or misaligned primer ends. These misaligned primers can be extended by PolIV. Exhibits no 3'-5' exonuclease (proofreading) activity. May be involved in translesional synthesis, in conjunction with the beta clamp from PolIII. This chain is DNA polymerase IV, found in Actinobacillus pleuropneumoniae serotype 3 (strain JL03).